The primary structure comprises 408 residues: Na(+)-translocating NADH-quinone reductase subunit F (408 aa).

Residues 4–24 form a helical membrane-spanning segment; that stretch reads VYLGVGMFTAIVLVLVLVILF. One can recognise a 2Fe-2S ferredoxin-type domain in the interval 33–127; sequence GDIIIGINGD…DMEIELDEEI (95 aa). Positions 70, 76, 79, and 111 each coordinate [2Fe-2S] cluster. The region spanning 130–270 is the FAD-binding FR-type domain; it reads IKKWECDVIS…SGPFGEFFAK (141 aa).

This sequence belongs to the NqrF family. In terms of assembly, composed of six subunits; NqrA, NqrB, NqrC, NqrD, NqrE and NqrF. [2Fe-2S] cluster serves as cofactor. Requires FAD as cofactor.

The protein resides in the cell inner membrane. It carries out the reaction a ubiquinone + n Na(+)(in) + NADH + H(+) = a ubiquinol + n Na(+)(out) + NAD(+). NQR complex catalyzes the reduction of ubiquinone-1 to ubiquinol by two successive reactions, coupled with the transport of Na(+) ions from the cytoplasm to the periplasm. The first step is catalyzed by NqrF, which accepts electrons from NADH and reduces ubiquinone-1 to ubisemiquinone by a one-electron transfer pathway. The sequence is that of Na(+)-translocating NADH-quinone reductase subunit F from Shewanella denitrificans (strain OS217 / ATCC BAA-1090 / DSM 15013).